Consider the following 444-residue polypeptide: Acyl-CoA 6-desaturase (444 aa).

At 1–131 the chain is on the cytoplasmic side; that stretch reads MGKGGNQGEG…DMNLFKTNHV (131 aa). The 78-residue stretch at 18–95 folds into the Cytochrome b5 heme-binding domain; sequence MPTFSWEEIQ…LKPLLIGELA (78 aa). The chain crosses the membrane as a helical span at residues 132 to 152; that stretch reads FFLLLLAHIIALESIAWFTVF. Residues 153–157 lie on the Lumenal side of the membrane; the sequence is YFGNG. A helical membrane pass occupies residues 158–178; that stretch reads WIPTLITAFVLATSQAQAGWL. Over 179–264 the chain is Cytoplasmic; the sequence is QHDYGHLSVY…KYLPYNHQHE (86 aa). A Histidine box-1 motif is present at residues 180–184; the sequence is HDYGH. The short motif at 217–221 is the Histidine box-2 element; it reads HFQHH. The helical transmembrane segment at 265–285 threads the bilayer; the sequence is YFFLIGPPLLIPMYFQYQIIM. Topologically, residues 286–305 are lumenal; that stretch reads TMIVHKNWVDLAWAISYYIR. A helical transmembrane segment spans residues 306 to 326; it reads FFVTYIPFYGILGALLFLNFI. Topologically, residues 327–444 are cytoplasmic; sequence RFLESHWFVW…KLWLDAYLHK (118 aa). Positions 382 to 386 match the Histidine box-3 motif; the sequence is QIEHH.

It belongs to the fatty acid desaturase type 1 family.

The protein resides in the endoplasmic reticulum membrane. It carries out the reaction (9Z,12Z)-octadecadienoyl-CoA + 2 Fe(II)-[cytochrome b5] + O2 + 2 H(+) = (6Z,9Z,12Z)-octadecatrienoyl-CoA + 2 Fe(III)-[cytochrome b5] + 2 H2O. The catalysed reaction is (9Z,12Z,15Z)-octadecatrienoyl-CoA + 2 Fe(II)-[cytochrome b5] + O2 + 2 H(+) = (6Z,9Z,12Z,15Z)-octadecatetraenoyl-CoA + 2 Fe(III)-[cytochrome b5] + 2 H2O. It catalyses the reaction (9Z,12Z,15Z,18Z,21Z)-tetracosapentaenoyl-CoA + 2 Fe(II)-[cytochrome b5] + O2 + 2 H(+) = (6Z,9Z,12Z,15Z,18Z,21Z)-tetracosahexaenoyl-CoA + 2 Fe(III)-[cytochrome b5] + 2 H2O. The enzyme catalyses (11E)-octadecenoyl-CoA + 2 Fe(II)-[cytochrome b5] + O2 + 2 H(+) = (6Z,11E)-octadecadienoyl-CoA + 2 Fe(III)-[cytochrome b5] + 2 H2O. It carries out the reaction (11Z,14Z)-eicosadienoyl-CoA + 2 Fe(II)-[cytochrome b5] + O2 + 2 H(+) = (8Z,11Z,14Z)-eicosatrienoyl-CoA + 2 Fe(III)-[cytochrome b5] + 2 H2O. The catalysed reaction is (11Z,14Z,17Z)-eicosatrienoyl-CoA + 2 Fe(II)-[cytochrome b5] + O2 + 2 H(+) = (8Z,11Z,14Z,17Z)-eicosatetraenoyl-CoA + 2 Fe(III)-[cytochrome b5] + 2 H2O. The protein operates within lipid metabolism; polyunsaturated fatty acid biosynthesis. Functionally, involved in the biosynthesis of highly unsaturated fatty acids (HUFA) from the essential polyunsaturated fatty acids (PUFA) linoleic acid (LA) (18:2n-6) and alpha-linolenic acid (ALA) (18:3n-3) precursors, acting as a fatty acyl-coenzyme A (CoA) desaturase that introduces a cis double bond at carbon 6 of the fatty acyl chain. Catalyzes the first and rate limiting step in this pathway which is the desaturation of LA (18:2n-6) and ALA (18:3n-3) into gamma-linoleate (GLA) (18:3n-6) and stearidonate (18:4n-3), respectively. Subsequently, in the biosynthetic pathway of HUFA n-3 series, it desaturates tetracosapentaenoate (24:5n-3) to tetracosahexaenoate (24:6n-3), which is then converted to docosahexaenoate (DHA)(22:6n-3), an important lipid for nervous system function. It can also desaturate (11E)-octadecenoate (trans-vaccenoate) at carbon 6 generating (6Z,11E)-octadecadienoate. In addition to Delta-6 activity, this enzyme exhibits Delta-8 activity with slight biases toward n-3 fatty acyl-CoA substrates. The polypeptide is Acyl-CoA 6-desaturase (FADS2) (Macaca fascicularis (Crab-eating macaque)).